The following is a 567-amino-acid chain: MEFIIGLIVILLALFSVGYFLRKNIYKEIDRLEAWKIEILNRSIVEEISKIKHLKMTGETEQFFERWRAEWDDIVTAHLPKVEELLYDAEEYSDKYRFSKAKQVLTHIEDLLSAADSNIEDILKEIADLVTSEEQNRKDIEKVKEQYQTVRKNLLAYSHLYGTLYDKMEQDLDEAWEGIKQYEEETENGNYMKARKILLEQDRRLDQLQLYINDVPKLIADCKQTVPGQLTKLKDGYQEMSEKGYKLEHIQITKELETLNKQLARAEKLLIDELNLEEASSILQMIDDAIETLYDQLEAEVEAGQEIKSRMPELTEAFEKLEQDHTQTKAETALVKESYKLTAGELDQQKAFEKRLEEIEKLMKQIREKLDRDHVAYSLLMDEINQLETFIEDAKALHDTFKGHLQSLRKEELQARETLAELKTMLTDTVRQLHKSNIPGVPAEMKERAEKAQEMIHQVHEQLENLPLNMPAVNQQLKEASDTVRNVVDETEEMLSKVDQIERIIQYGNRFRSQNHILSEQLKEAERRFYAYDYNGSFDIAAAAVEKASPGAVQKLLAQQEKEYQHQ.

Residues 1–2 (ME) lie on the Extracellular side of the membrane. Residues 3-21 (FIIGLIVILLALFSVGYFL) form a helical membrane-spanning segment. Residues 22–567 (RKNIYKEIDR…AQQEKEYQHQ (546 aa)) lie on the Cytoplasmic side of the membrane. Coiled-coil stretches lie at residues 108–185 (IEDL…YEEE), 243–375 (KGYK…RDHV), and 402–529 (KGHL…ERRF).

The protein belongs to the EzrA family.

The protein resides in the cell membrane. Its function is as follows. Negative regulator of FtsZ ring formation; modulates the frequency and position of FtsZ ring formation. Inhibits FtsZ ring formation at polar sites. Interacts either with FtsZ or with one of its binding partners to promote depolymerization. The chain is Septation ring formation regulator EzrA from Bacillus pumilus (strain SAFR-032).